Consider the following 302-residue polypeptide: N-acetylmuramic acid 6-phosphate etherase (302 aa).

The SIS domain maps to 58–221 (IFERFKKGGR…TTTLMIKLGK (164 aa)). The active-site Proton donor is Glu86. The active site involves Glu117.

Belongs to the GCKR-like family. MurNAc-6-P etherase subfamily. Homodimer.

It catalyses the reaction N-acetyl-D-muramate 6-phosphate + H2O = N-acetyl-D-glucosamine 6-phosphate + (R)-lactate. Its pathway is amino-sugar metabolism; N-acetylmuramate degradation. Specifically catalyzes the cleavage of the D-lactyl ether substituent of MurNAc 6-phosphate, producing GlcNAc 6-phosphate and D-lactate. The chain is N-acetylmuramic acid 6-phosphate etherase from Mycoplasma mycoides subsp. mycoides SC (strain CCUG 32753 / NCTC 10114 / PG1).